Reading from the N-terminus, the 430-residue chain is MKTQMNYAKEGVFTKEMQIVAQKENLSKDFLLENIACGKIIIPANINHKSLDPNGIGFGLRTKVNVNLGVSNDCVDYSEEMKKVELAHKFGIEAIMDLSNYGKTSRFRDELVNVSKAMIGTVPVYDAVGFLEKDLKQIGAKDFLDVVYHHAKSGVDFMTIHAGINSRATHIFKQSKRLTNIVSRGGSVLYAWMMMKDAENPFFEYYDDLLDICLKYDVTLSLGDALRPGSTHDASDGAQISELIELSLLTQRAWDVGVQVMIEGPGHMAINEIEANMQLEKRLCKGAPFYVLGPLVTDIGAGYDHISGAIGGAVAAASGADMLCYVTPAEHLRLPNLEDVREGIVATKIAAHAGDIAKLPKERARDDEMSKARQEIDWEKMFKLAIDGEKAKKMFNERRPDDLNSCSMCGKMCAMNTMNQILKGEDVSLV.

Substrate-binding positions include Asn-67, Met-96, Tyr-125, His-161, 183-185 (SRG), 224-227 (DALR), and Glu-263. His-267 serves as a coordination point for Zn(2+). Residue Tyr-290 coordinates substrate. His-331 provides a ligand contact to Zn(2+). Cys-406, Cys-409, and Cys-413 together coordinate [4Fe-4S] cluster.

It belongs to the ThiC family. Homodimer. It depends on [4Fe-4S] cluster as a cofactor.

The enzyme catalyses 5-amino-1-(5-phospho-beta-D-ribosyl)imidazole + S-adenosyl-L-methionine = 4-amino-2-methyl-5-(phosphooxymethyl)pyrimidine + CO + 5'-deoxyadenosine + formate + L-methionine + 3 H(+). It functions in the pathway cofactor biosynthesis; thiamine diphosphate biosynthesis. Its function is as follows. Catalyzes the synthesis of the hydroxymethylpyrimidine phosphate (HMP-P) moiety of thiamine from aminoimidazole ribotide (AIR) in a radical S-adenosyl-L-methionine (SAM)-dependent reaction. The chain is Phosphomethylpyrimidine synthase from Campylobacter jejuni subsp. doylei (strain ATCC BAA-1458 / RM4099 / 269.97).